Reading from the N-terminus, the 601-residue chain is Elongation factor 4 (601 aa).

The tr-type G domain occupies 2–184; that stretch reads DLIRNFSIIA…EMIARVPPPT (183 aa). GTP is bound by residues 14–19 and 131–134; these read DHGKST and NKID.

It belongs to the TRAFAC class translation factor GTPase superfamily. Classic translation factor GTPase family. LepA subfamily.

It is found in the cell inner membrane. The enzyme catalyses GTP + H2O = GDP + phosphate + H(+). Required for accurate and efficient protein synthesis under certain stress conditions. May act as a fidelity factor of the translation reaction, by catalyzing a one-codon backward translocation of tRNAs on improperly translocated ribosomes. Back-translocation proceeds from a post-translocation (POST) complex to a pre-translocation (PRE) complex, thus giving elongation factor G a second chance to translocate the tRNAs correctly. Binds to ribosomes in a GTP-dependent manner. The polypeptide is Elongation factor 4 (Polynucleobacter necessarius subsp. necessarius (strain STIR1)).